We begin with the raw amino-acid sequence, 213 residues long: Protein nullo (213 aa).

In terms of tissue distribution, blastoderm. Throughout the entire cortex of the embryo although the distribution is not uniform.

Functionally, actin-myosin network stability during cellularization. Might be involved in increasing actin-actin interactions or membrane-to-cytoskeleton attachments. nullo together with Sry-a and bnk may provide auxiliary functions, by acting both to stabilize a large and dynamic microfilament structure and regulate its functions. The chain is Protein nullo (nullo) from Drosophila melanogaster (Fruit fly).